Consider the following 356-residue polypeptide: MKKKVLVGMSGGVDSSVAAYLLKEQGYEVIGVTMQIWQDDEEFIEKEGGCCSLSAVADARRVANKIGIPFYVMNFKDAFKRNVIDYFVDEYMEGRTPNPCIACNKFIKFSSFLDKAMAIGIDYVATGHYAIIEKHNDRYIIKKSEDDKKDQTYALYNLTQFQLERTLMPCGQYKKSKIREIAKEIGLRVHNKKDSEEICFIPDNDHGRYIKNRFPNKVREGNFVDKQGNILGTHKGIVYYTIGQRKGLGIAFGKPMYVVDINPFRNEVVLGDLEDLLNTKLIAKDTNYIPFDTLKEPMEVEAKIRYSQTPSKAIITPIEDGRVRVNFHEKQRAITKGQSVVFYKDDLLIGGGIIEK.

Residues 8-15 (GMSGGVDS) and Met-34 contribute to the ATP site. Cys-103 serves as the catalytic Nucleophile. Cys-103 and Cys-199 are oxidised to a cystine. Residue Gly-127 participates in ATP binding. Positions 149–151 (KDQ) are interaction with tRNA. Cys-199 (cysteine persulfide intermediate) is an active-site residue. An interaction with tRNA region spans residues 305–306 (RY).

It belongs to the MnmA/TRMU family.

It is found in the cytoplasm. The catalysed reaction is S-sulfanyl-L-cysteinyl-[protein] + uridine(34) in tRNA + AH2 + ATP = 2-thiouridine(34) in tRNA + L-cysteinyl-[protein] + A + AMP + diphosphate + H(+). Functionally, catalyzes the 2-thiolation of uridine at the wobble position (U34) of tRNA, leading to the formation of s(2)U34. The polypeptide is tRNA-specific 2-thiouridylase MnmA 1 (Clostridium botulinum (strain ATCC 19397 / Type A)).